The chain runs to 2199 residues: DNA polymerase epsilon catalytic subunit A (2199 aa).

Residues Cys-2069, Cys-2072, Cys-2104, and Cys-2107 each contribute to the Zn(2+) site. The segment at 2069–2107 adopts a CysA-type zinc-finger fold; that stretch reads CKQCGVHQDFDLCLHEHLWPTRDDMGTLVFSDGWSCSSC. Cys-2138, Cys-2141, Cys-2153, and Cys-2155 together coordinate [4Fe-4S] cluster. Positions 2138–2155 match the CysB motif motif; that stretch reads CSKCKTVKQWSLKERCSC.

This sequence belongs to the DNA polymerase type-B family. In terms of assembly, heterotetramer. Consists of 4 subunits: pol2, dpb2, dpb3 and dpb4. Requires [4Fe-4S] cluster as cofactor.

The protein resides in the nucleus. It catalyses the reaction DNA(n) + a 2'-deoxyribonucleoside 5'-triphosphate = DNA(n+1) + diphosphate. DNA polymerase II participates in chromosomal DNA replication. The sequence is that of DNA polymerase epsilon catalytic subunit A (pol2) from Schizosaccharomyces pombe (strain 972 / ATCC 24843) (Fission yeast).